Here is a 144-residue protein sequence, read N- to C-terminus: HTH-type transcriptional regulator LrpC (144 aa).

One can recognise an HTH asnC-type domain in the interval 3–64 (LDQIDLNIIE…EVDQKKLGLP (62 aa)). The segment at residues 22-41 (MRELGRKIKLSPPSVTERVR) is a DNA-binding region (H-T-H motif).

Its function is as follows. Transcriptional regulator with a possible role in regulation of amino acid metabolism. Plays a role in the growth phase transition. This is HTH-type transcriptional regulator LrpC (lrpC) from Bacillus subtilis (strain 168).